The sequence spans 686 residues: Translation initiation factor IF-2 (686 aa).

The disordered stretch occupies residues 35–99 (MSTVEDETAE…EHGQKDTDRR (65 aa)). Over residues 50–68 (LQEEDKPEEKISKKEPDKK) the composition is skewed to basic and acidic residues. Over residues 69 to 79 (DRKKTKGKKQM) the composition is skewed to basic residues. Basic and acidic residues predominate over residues 87 to 99 (EGTEHGQKDTDRR). The region spanning 186–355 (LRPPIVTVMG…LLVAEMEELK (170 aa)) is the tr-type G domain. Residues 195 to 202 (GHVDHGKT) are G1. 195–202 (GHVDHGKT) is a GTP binding site. The tract at residues 220–224 (GITQH) is G2. The G3 stretch occupies residues 241–244 (DTPG). GTP-binding positions include 241 to 245 (DTPGH) and 295 to 298 (NKVD). The tract at residues 295 to 298 (NKVD) is G4. Residues 331-333 (SAL) form a G5 region.

Belongs to the TRAFAC class translation factor GTPase superfamily. Classic translation factor GTPase family. IF-2 subfamily.

It is found in the cytoplasm. In terms of biological role, one of the essential components for the initiation of protein synthesis. Protects formylmethionyl-tRNA from spontaneous hydrolysis and promotes its binding to the 30S ribosomal subunits. Also involved in the hydrolysis of GTP during the formation of the 70S ribosomal complex. This is Translation initiation factor IF-2 from Halothermothrix orenii (strain H 168 / OCM 544 / DSM 9562).